Here is a 285-residue protein sequence, read N- to C-terminus: Foldase protein PrsA 2 (285 aa).

The signal sequence occupies residues 1–20; that stretch reads MRGKHIFIITALISILMLSA. The N-palmitoyl cysteine moiety is linked to residue C21. A lipid anchor (S-diacylglycerol cysteine) is attached at C21. The PpiC domain occupies 134-224; it reads KPEIKASHIL…NGYHVIKLTD (91 aa).

The protein belongs to the PrsA family.

It localises to the cell membrane. It catalyses the reaction [protein]-peptidylproline (omega=180) = [protein]-peptidylproline (omega=0). In terms of biological role, plays a major role in protein secretion by helping the post-translocational extracellular folding of several secreted proteins. In Bacillus cereus (strain ATCC 14579 / DSM 31 / CCUG 7414 / JCM 2152 / NBRC 15305 / NCIMB 9373 / NCTC 2599 / NRRL B-3711), this protein is Foldase protein PrsA 2 (prsA2).